The chain runs to 257 residues: Protein orai-2 (257 aa).

A run of 4 helical transmembrane segments spans residues 62–79 (ASSRTSALLSGFAMVAMV), 94–114 (LIAFSACTTVLVAVHLFALLI), 156–176 (LGILLFLAEVVLLCWIKFLPI), and 201–221 (LVSTIIMVPVGIIFVIFTIHF).

Belongs to the Orai family.

The protein localises to the membrane. Functionally, ca(2+) release-activated Ca(2+)-like (CRAC-like) channel subunit which mediates Ca(2+) influx and increase in Ca(2+)-selective current by synergy with the Ca(2+) sensor, stim1. The polypeptide is Protein orai-2 (orai2) (Xenopus laevis (African clawed frog)).